The following is a 259-amino-acid chain: Hydroxyacylglutathione hydrolase (259 aa).

Zn(2+)-binding residues include histidine 56, histidine 58, aspartate 60, histidine 61, histidine 112, aspartate 133, and histidine 171.

The protein belongs to the metallo-beta-lactamase superfamily. Glyoxalase II family. As to quaternary structure, monomer. Zn(2+) is required as a cofactor.

It carries out the reaction an S-(2-hydroxyacyl)glutathione + H2O = a 2-hydroxy carboxylate + glutathione + H(+). It participates in secondary metabolite metabolism; methylglyoxal degradation; (R)-lactate from methylglyoxal: step 2/2. Thiolesterase that catalyzes the hydrolysis of S-D-lactoyl-glutathione to form glutathione and D-lactic acid. In Pseudomonas putida (strain W619), this protein is Hydroxyacylglutathione hydrolase.